A 358-amino-acid chain; its full sequence is uncharacterized protein (358 aa).

The span at 70–88 (RPAATAGTTPATGASGSAR) shows a compositional bias: low complexity. The interval 70 to 93 (RPAATAGTTPATGASGSARPTDAA) is disordered. Residues 178–353 (PSTCRGDNVS…AFSAAIQAGE (176 aa)) enclose the Macro domain.

This is an uncharacterized protein from Mycobacterium bovis (strain ATCC BAA-935 / AF2122/97).